A 97-amino-acid polypeptide reads, in one-letter code: Small, acid-soluble spore protein gamma-type (97 aa).

Positions 1–42 (MAKQTNKTASGTSTQHVKQQNAQASKNNFGTEFGSETNVQEV) are enriched in polar residues. The interval 1–97 (MAKQTNKTAS…KNQNSGKYQG (97 aa)) is disordered. 2 repeats span residues 23 to 56 (QASK…KSQN) and 58 to 91 (QASK…KNQN). Over residues 43–63 (KQQNAQAAANKSQNAQASKNN) the composition is skewed to low complexity. Residues 69-78 (ASETSAQEVR) show a composition bias toward polar residues. Low complexity predominate over residues 79–91 (QQNAQAQAKKNQN).

This sequence belongs to the gamma-type SASP family.

In terms of biological role, SASP are proteins degraded in the first minutes of spore germination and provide amino acids for both new protein synthesis and metabolism. These proteins may be involved in dormant spore's high resistance to UV light. The protein is Small, acid-soluble spore protein gamma-type (sasP-B) of Priestia megaterium (Bacillus megaterium).